The primary structure comprises 858 residues: Polyhomeotic-like protein 2 (858 aa).

6 disordered regions span residues 1-76 (MENE…QYLQ), 230-307 (QQTP…MEGR), 337-388 (PQPS…VALQ), 407-444 (LQCPTANLHKPGGSQQCHPPTPDTGPQNGHPEGVPHTP), 473-493 (KEVAPGEKSVPETRSGPSPHQ), and 529-561 (TDLSSPGMTSGNGNSASSIAGTAPQNGENKPPQ). Composition is skewed to low complexity over residues 10–34 (TSSSACATSSTSGASSSSGCNNSSS) and 230–241 (QQTPAAAASGPT). The interaction with BMI1 stretch occupies residues 33–53 (SSGGSGRPTGPQISVYSGIPD). The span at 265–274 (PAQSRNTAQA) shows a compositional bias: polar residues. Residues 337–358 (PQPSSKHLQPQFVIQQQPQPQQ) are compositionally biased toward low complexity. Over residues 379-388 (ASVSPSVALQ) the composition is skewed to polar residues. Residues 473–483 (KEVAPGEKSVP) show a composition bias toward basic and acidic residues. Residues 537 to 551 (TSGNGNSASSIAGTA) are compositionally biased toward low complexity. An HD1 motif is present at residues 558–587 (KPPQAIVKPQILTHVIEGFVIQEGAEPFPV). Residues Lys-598 and Lys-600 each participate in a glycyl lysine isopeptide (Lys-Gly) (interchain with G-Cter in SUMO2) cross-link. A Phosphothreonine modification is found at Thr-619. Ser-621 bears the Phosphoserine mark. Lys-632 participates in a covalent cross-link: Glycyl lysine isopeptide (Lys-Gly) (interchain with G-Cter in SUMO2). An FCS-type zinc finger spans residues 633-667 (EEGAPLKLKCELCGRVDFAYKFKRSKRFCSMACAK). 4 residues coordinate Zn(2+): Cys-642, Cys-645, Cys-661, and Cys-665. Disordered regions lie at residues 688–720 (QKAGAATHNRRRASKASLPPLTKDTKKQPTGTV) and 732–768 (HSQEDSSRCSDNSSYEEPLSPISASSSTSRRRQGQRD). Lys-702 is covalently cross-linked (Glycyl lysine isopeptide (Lys-Gly) (interchain with G-Cter in SUMO2)). Phosphoserine is present on Ser-751. One can recognise an SAM domain in the interval 794–858 (WNVEDVYEFI…YARISMLKDS (65 aa)). Lys-847 is covalently cross-linked (Glycyl lysine isopeptide (Lys-Gly) (interchain with G-Cter in SUMO2)).

Component of a PRC1-like complex. Interacts with CBX4. Interacts with BMI1, PCGF2, PHC1 and RNF2. Interacts with CHTOP. Interacts with the N-terminal region of the SP1 transcription factor and with MAPKAPK2. Interacts with SAMD7 and SAMD11.

It localises to the nucleus. Functionally, component of a Polycomb group (PcG) multiprotein PRC1-like complex, a complex class required to maintain the transcriptionally repressive state of many genes, including Hox genes, throughout development. PcG PRC1 complex acts via chromatin remodeling and modification of histones; it mediates monoubiquitination of histone H2A 'Lys-119', rendering chromatin heritably changed in its expressibility. The polypeptide is Polyhomeotic-like protein 2 (PHC2) (Homo sapiens (Human)).